The primary structure comprises 879 residues: JmjC domain-containing histone demethylation protein 1 (879 aa).

3 disordered regions span residues 1 to 45 (MSEQ…EEGK), 117 to 212 (STSP…PKRK), and 407 to 449 (KDVK…EGLK). Residues 23 to 116 (PEPCPLCRET…KWYCAPCLAR (94 aa)) form a PHD-type zinc finger. 2 stretches are compositionally biased toward basic and acidic residues: residues 183–192 (IDMKSEREQQ) and 407–433 (KDVK…HLTE). Residues 416-598 (NDSRESSEIR…TQLRLRQIEI (183 aa)) form the JmjC domain. T472 contributes to the substrate binding site. 2 residues coordinate Fe cation: H475 and D477. Residue K492 coordinates substrate. H566 provides a ligand contact to Fe cation. The disordered stretch occupies residues 763-879 (HPPAWSENRQ…KVEEDMDIDH (117 aa)). A compositionally biased stretch (polar residues) spans 769–782 (ENRQSPQIETTTVQ). Low complexity predominate over residues 786–818 (PSTSSSDAISGSGPGASPGASANGGANENEQAE). Positions 848–864 (FVEKKTVWGPKLDKEKI) are enriched in basic and acidic residues.

This sequence belongs to the JHDM1 histone demethylase family. The cofactor is Fe(2+).

It localises to the nucleus. The enzyme catalyses N(6),N(6)-dimethyl-L-lysyl(36)-[histone H3] + 2 2-oxoglutarate + 2 O2 = L-lysyl(36)-[histone H3] + 2 formaldehyde + 2 succinate + 2 CO2. Histone demethylase that specifically demethylates 'Lys-36' of histone H3, thereby playing a central role in histone code. This chain is JmjC domain-containing histone demethylation protein 1 (JHD1), found in Cryptococcus neoformans var. neoformans serotype D (strain B-3501A) (Filobasidiella neoformans).